The chain runs to 426 residues: Serine--tRNA ligase (426 aa).

229-231 (TAE) lines the L-serine pocket. 260 to 262 (RSE) is an ATP binding site. E283 provides a ligand contact to L-serine. 347 to 350 (EIAS) provides a ligand contact to ATP. Residue S383 coordinates L-serine.

This sequence belongs to the class-II aminoacyl-tRNA synthetase family. Type-1 seryl-tRNA synthetase subfamily. Homodimer. The tRNA molecule binds across the dimer.

The protein localises to the cytoplasm. The enzyme catalyses tRNA(Ser) + L-serine + ATP = L-seryl-tRNA(Ser) + AMP + diphosphate + H(+). It catalyses the reaction tRNA(Sec) + L-serine + ATP = L-seryl-tRNA(Sec) + AMP + diphosphate + H(+). The protein operates within aminoacyl-tRNA biosynthesis; selenocysteinyl-tRNA(Sec) biosynthesis; L-seryl-tRNA(Sec) from L-serine and tRNA(Sec): step 1/1. In terms of biological role, catalyzes the attachment of serine to tRNA(Ser). Is also able to aminoacylate tRNA(Sec) with serine, to form the misacylated tRNA L-seryl-tRNA(Sec), which will be further converted into selenocysteinyl-tRNA(Sec). The sequence is that of Serine--tRNA ligase from Rickettsia bellii (strain OSU 85-389).